We begin with the raw amino-acid sequence, 246 residues long: MRGIILLSFVLTSCLAADAVPAAADAAAVTTTTPAGAAAAAATTATTAKANTAATTNTAAAAAAAADTLTTKGTTTGTAKTTGVTTGTAKTTATTAVTSDTAVAANPATMNPSELSIYSLTVTMNQAQLQNFLATHSSGAATAGATGTSVASGASGASLEDSTTTTAAAAAGGNGAATIDDTTKGLTFVTSRTLKPSSSATSQGSAQASGSGSNASQANAAGVYSTNSVLVFVSICIGFIGGSLGI.

A signal peptide spans 1-16 (MRGIILLSFVLTSCLA). Asparagine 214 carries N-linked (GlcNAc...) asparagine glycosylation. The GPI-anchor amidated asparagine moiety is linked to residue asparagine 219. Residues 220–246 (AAGVYSTNSVLVFVSICIGFIGGSLGI) constitute a propeptide, removed in mature form.

The protein resides in the cell membrane. The polypeptide is Predicted GPI-anchored protein 33 (PGA33) (Candida albicans (strain SC5314 / ATCC MYA-2876) (Yeast)).